A 149-amino-acid polypeptide reads, in one-letter code: Probable cyclic pyranopterin monophosphate synthase (149 aa).

Substrate is bound by residues 67–69 (LCH) and 103–104 (ME). Asp118 is a catalytic residue.

Belongs to the MoaC family. In terms of assembly, homohexamer; trimer of dimers.

The enzyme catalyses (8S)-3',8-cyclo-7,8-dihydroguanosine 5'-triphosphate = cyclic pyranopterin phosphate + diphosphate. It participates in cofactor biosynthesis; molybdopterin biosynthesis. In terms of biological role, catalyzes the conversion of (8S)-3',8-cyclo-7,8-dihydroguanosine 5'-triphosphate to cyclic pyranopterin monophosphate (cPMP). The sequence is that of Probable cyclic pyranopterin monophosphate synthase from Saccharolobus solfataricus (strain ATCC 35092 / DSM 1617 / JCM 11322 / P2) (Sulfolobus solfataricus).